Consider the following 131-residue polypeptide: Large ribosomal subunit protein bL17 (131 aa).

Belongs to the bacterial ribosomal protein bL17 family. As to quaternary structure, part of the 50S ribosomal subunit. Contacts protein L32.

The protein is Large ribosomal subunit protein bL17 of Thermotoga maritima (strain ATCC 43589 / DSM 3109 / JCM 10099 / NBRC 100826 / MSB8).